The primary structure comprises 315 residues: Ribose-phosphate pyrophosphokinase (315 aa).

ATP-binding positions include 37-39 (DGE) and 96-97 (RQ). 2 residues coordinate Mg(2+): His-131 and Asp-170. Residue Lys-194 is part of the active site. D-ribose 5-phosphate-binding positions include Arg-196, Asp-220, and 224–228 (DTGGT).

This sequence belongs to the ribose-phosphate pyrophosphokinase family. Class I subfamily. Homohexamer. It depends on Mg(2+) as a cofactor.

Its subcellular location is the cytoplasm. It catalyses the reaction D-ribose 5-phosphate + ATP = 5-phospho-alpha-D-ribose 1-diphosphate + AMP + H(+). Its pathway is metabolic intermediate biosynthesis; 5-phospho-alpha-D-ribose 1-diphosphate biosynthesis; 5-phospho-alpha-D-ribose 1-diphosphate from D-ribose 5-phosphate (route I): step 1/1. Functionally, involved in the biosynthesis of the central metabolite phospho-alpha-D-ribosyl-1-pyrophosphate (PRPP) via the transfer of pyrophosphoryl group from ATP to 1-hydroxyl of ribose-5-phosphate (Rib-5-P). The polypeptide is Ribose-phosphate pyrophosphokinase (Buchnera aphidicola subsp. Acyrthosiphon pisum (strain APS) (Acyrthosiphon pisum symbiotic bacterium)).